The primary structure comprises 152 residues: VQ motif-containing protein 8, chloroplastic (152 aa).

The tract at residues 1–42 is disordered; the sequence is MIPTRCNEINGSRPSSLKLAGESHTIKKTSSCKSKPRPHGRA. Residues 1-58 constitute a chloroplast transit peptide; it reads MIPTRCNEINGSRPSSLKLAGESHTIKKTSSCKSKPRPHGRASPVIIYAHSPKVIHTR. The VQ signature appears at 62 to 71; it reads FMALVQRLTG. The segment at 80–108 is disordered; sequence TSESSSSVVTEEVNVGDDNTAAPFSQDRT. Residues 81 to 92 are compositionally biased toward low complexity; sequence SESSSSVVTEEV.

It is found in the plastid. It localises to the chloroplast. May be involved in chloroplast development. The protein is VQ motif-containing protein 8, chloroplastic of Arabidopsis thaliana (Mouse-ear cress).